Consider the following 122-residue polypeptide: Large ribosomal subunit protein uL14 (122 aa).

Belongs to the universal ribosomal protein uL14 family. Part of the 50S ribosomal subunit. Forms a cluster with proteins L3 and L19. In the 70S ribosome, L14 and L19 interact and together make contacts with the 16S rRNA in bridges B5 and B8.

In terms of biological role, binds to 23S rRNA. Forms part of two intersubunit bridges in the 70S ribosome. The protein is Large ribosomal subunit protein uL14 of Microcystis aeruginosa (strain NIES-843 / IAM M-2473).